The following is a 185-amino-acid chain: Putative gustatory receptor clone PTE01 (185 aa).

Residues 1 to 11 (MYLFLSNLSLA) form a helical membrane-spanning segment. Residues 12 to 42 (DISFTSTTLPKMIVDIQTNNRAISYSGCLTQ) are Extracellular-facing. Residues 43–62 (MSFFMLFGCLDSLLLTAMAY) form a helical membrane-spanning segment. The Cytoplasmic portion of the chain corresponds to 63–84 (DRFVAICHPLHYQVIMNPRLCG). A helical membrane pass occupies residues 85–105 (LLVFLSILISLLVSQLHNSVV). The Extracellular portion of the chain corresponds to 106 to 138 (LQLTYFKSVDISHFFCDPSLLLNLACSDTFTNN). Residues 139–160 (IVMYFVGAISGFLPISGIFFSY) form a helical membrane-spanning segment. At 161–182 (YKIVSSILRMPSPGGKYKAFST) the chain is on the cytoplasmic side. A helical membrane pass occupies residues 183–185 (CGS).

Belongs to the G-protein coupled receptor 1 family. As to expression, tongue specific.

The protein localises to the cell membrane. Possible taste receptor. The chain is Putative gustatory receptor clone PTE01 from Rattus norvegicus (Rat).